The following is a 132-amino-acid chain: ATP synthase epsilon chain (132 aa).

Belongs to the ATPase epsilon chain family. As to quaternary structure, F-type ATPases have 2 components, CF(1) - the catalytic core - and CF(0) - the membrane proton channel. CF(1) has five subunits: alpha(3), beta(3), gamma(1), delta(1), epsilon(1). CF(0) has three main subunits: a, b and c.

It is found in the cell inner membrane. Functionally, produces ATP from ADP in the presence of a proton gradient across the membrane. This Jannaschia sp. (strain CCS1) protein is ATP synthase epsilon chain.